A 272-amino-acid chain; its full sequence is Nitrogenase iron protein (272 aa).

ATP is bound at residue 8–15 (GKGGIGKS). Residue Cys-94 participates in [4Fe-4S] cluster binding. Arg-97 is subject to ADP-ribosylarginine; by dinitrogenase reductase ADP-ribosyltransferase. Cys-129 is a [4Fe-4S] cluster binding site.

Belongs to the NifH/BchL/ChlL family. Homodimer. The cofactor is [4Fe-4S] cluster. The reversible ADP-ribosylation of Arg-97 inactivates the nitrogenase reductase and regulates nitrogenase activity.

The enzyme catalyses N2 + 8 reduced [2Fe-2S]-[ferredoxin] + 16 ATP + 16 H2O = H2 + 8 oxidized [2Fe-2S]-[ferredoxin] + 2 NH4(+) + 16 ADP + 16 phosphate + 6 H(+). The key enzymatic reactions in nitrogen fixation are catalyzed by the nitrogenase complex, which has 2 components: the iron protein and the molybdenum-iron protein. The polypeptide is Nitrogenase iron protein (Alkaliphilus metalliredigens (strain QYMF)).